The sequence spans 178 residues: UPF0302 protein BCAH187_A1683 (178 aa).

It belongs to the UPF0302 family.

The polypeptide is UPF0302 protein BCAH187_A1683 (Bacillus cereus (strain AH187)).